Consider the following 327-residue polypeptide: Undecaprenyl-phosphate 4-deoxy-4-formamido-L-arabinose transferase (327 aa).

The Cytoplasmic portion of the chain corresponds to 1-235; the sequence is MFDAAPIKKV…TCLTTTPLRL (235 aa). The helical transmembrane segment at 236–256 threads the bilayer; it reads LSLLGSVIAIGGFSLSVLLIV. The Periplasmic segment spans residues 257-269; that stretch reads LRLALGPQWAAEG. A helical membrane pass occupies residues 270–290; sequence VFMLFAVLFTFIGAQFIGMGL. At 291–327 the chain is on the cytoplasmic side; sequence LGEYIGRIYNDVRARPRYFVQQVIYPESTSFTEESHQ.

It belongs to the glycosyltransferase 2 family.

It is found in the cell inner membrane. The enzyme catalyses UDP-4-deoxy-4-formamido-beta-L-arabinose + di-trans,octa-cis-undecaprenyl phosphate = 4-deoxy-4-formamido-alpha-L-arabinopyranosyl di-trans,octa-cis-undecaprenyl phosphate + UDP. Its pathway is glycolipid biosynthesis; 4-amino-4-deoxy-alpha-L-arabinose undecaprenyl phosphate biosynthesis; 4-amino-4-deoxy-alpha-L-arabinose undecaprenyl phosphate from UDP-4-deoxy-4-formamido-beta-L-arabinose and undecaprenyl phosphate: step 1/2. The protein operates within bacterial outer membrane biogenesis; lipopolysaccharide biosynthesis. Catalyzes the transfer of 4-deoxy-4-formamido-L-arabinose from UDP to undecaprenyl phosphate. The modified arabinose is attached to lipid A and is required for resistance to polymyxin and cationic antimicrobial peptides. This is Undecaprenyl-phosphate 4-deoxy-4-formamido-L-arabinose transferase from Salmonella paratyphi A (strain ATCC 9150 / SARB42).